Here is a 978-residue protein sequence, read N- to C-terminus: Copper-transporting ATPase HMA4 (978 aa).

Basic and acidic residues predominate over residues 1 to 11; it reads MEQNGENHLKD. A disordered region spans residues 1 to 35; sequence MEQNGENHLKDPLLQADGGGSGASPAGASPRKERK. HMA domains follow at residues 37–103, 111–177, and 186–252; these read RKVM…FEVD, AVCR…FGAD, and NKVH…QPPK. Positions 48, 51, 122, and 125 each coordinate Cu(+). Transmembrane regions (helical) follow at residues 280 to 300, 315 to 335, 352 to 372, 385 to 405, 545 to 565, 584 to 604, 907 to 927, and 935 to 955; these read FLWS…LPMI, MTIG…IIGW, MDVL…YIVL, FFET…LEVV, FFVP…FVAG, LALQ…LGLA, VWAL…LFPF, and WLAG…SLLL.

This sequence belongs to the cation transport ATPase (P-type) (TC 3.A.3) family. Type IB subfamily. In terms of tissue distribution, highly expressed in roots. Expressed in vascular tissues of the stele, mainly in pericycle cells.

It localises to the vacuole membrane. The enzyme catalyses Cu(+)(in) + ATP + H2O = Cu(+)(out) + ADP + phosphate + H(+). Functionally, copper (Cu) transporter that mediates Cu transport in root vacuoles. Involved in Cu detoxification by sequestrating Cu into root vacuoles and limiting translocation of Cu from the roots to the shoots, and accumulation in grains. This Oryza sativa subsp. japonica (Rice) protein is Copper-transporting ATPase HMA4.